A 595-amino-acid chain; its full sequence is Aspartate--tRNA(Asp/Asn) ligase (595 aa).

E174 provides a ligand contact to L-aspartate. Residues 198–201 (QLFK) form an aspartate region. R220 serves as a coordination point for L-aspartate. ATP contacts are provided by residues 220-222 (RDE) and Q229. H456 contacts L-aspartate. E486 contacts ATP. R493 contacts L-aspartate. 538–541 (GFDR) is a binding site for ATP.

This sequence belongs to the class-II aminoacyl-tRNA synthetase family. Type 1 subfamily. Homodimer.

Its subcellular location is the cytoplasm. It catalyses the reaction tRNA(Asx) + L-aspartate + ATP = L-aspartyl-tRNA(Asx) + AMP + diphosphate. Aspartyl-tRNA synthetase with relaxed tRNA specificity since it is able to aspartylate not only its cognate tRNA(Asp) but also tRNA(Asn). Reaction proceeds in two steps: L-aspartate is first activated by ATP to form Asp-AMP and then transferred to the acceptor end of tRNA(Asp/Asn). In Gloeobacter violaceus (strain ATCC 29082 / PCC 7421), this protein is Aspartate--tRNA(Asp/Asn) ligase.